The sequence spans 610 residues: MSESFDASAFLKTVTSQPGVYRMYDAGNTVIYVGKAKDLKKRLASYFRSHVASRKTEALVKSIKHIDVTITHTETEALLLEHNYIKLYQPRYNVLLRDDKSYPMIFLSGDAHPRLTVHRGAKHAKGEYFGPFPNGNAVRETLILLQKLFPVRQCENSVYRNRSRPCLQYQIGRCLGPCVSGLVSEEDYRQQVEYVRLFLSGKDQQVLNQLISRMESASRDLRFEDAARIRDQIQAVRRVTEKQFVSGDGEDLDVISVAFDAGMACVYVLFIRQGKVLGSRSYFPKVPGGTELGEVVQTFVGQFYLQGNSGRTLPTEILLDFTLPDKDLLTESLTAVAGRKVQIQTKPRGDRARYLKLARTNAATALVTKLSQQSTIHQRLAALANVLQLPEIHRMECFDISHTMGEQTVASCVVFDANGPLRSEYRRYNISGITPGDDYAAMAQVLQRRYGKALDDSKIPDVIVIDGGKGQLGQAQAVFDSLQVSWDKNKPLLLGVAKGSDRKAGLETLFLEATGEGMALPADSPALHVIQHIRDDSHDHAIGGHRKKRAKVKNTSTLELIEGVGPKRRQTLLKYMGGLQPLMNASIEEIANVPGISHGLAEKIFHALKH.

The GIY-YIG domain maps to 16–94 (SQPGVYRMYD…IKLYQPRYNV (79 aa)). Positions 204–239 (QQVLNQLISRMESASRDLRFEDAARIRDQIQAVRRV) constitute a UVR domain.

The protein belongs to the UvrC family. In terms of assembly, interacts with UvrB in an incision complex.

It localises to the cytoplasm. Its function is as follows. The UvrABC repair system catalyzes the recognition and processing of DNA lesions. UvrC both incises the 5' and 3' sides of the lesion. The N-terminal half is responsible for the 3' incision and the C-terminal half is responsible for the 5' incision. This Pectobacterium atrosepticum (strain SCRI 1043 / ATCC BAA-672) (Erwinia carotovora subsp. atroseptica) protein is UvrABC system protein C.